A 316-amino-acid polypeptide reads, in one-letter code: NAC domain-containing protein 2 (316 aa).

Residues 17–170 form the NAC domain; it reads LPPGFRFHPT…DWVLCRLYNK (154 aa). Residues 114–176 mediate DNA binding; it reads LGIKKALVFY…LYNKKNEWEK (63 aa). The segment at 185–210 is disordered; it reads EEASDMVTSQSHSHTHSWGETRTPES. The span at 190 to 200 shows a compositional bias: polar residues; that stretch reads MVTSQSHSHTH.

As to quaternary structure, forms homodimer. Interacts with NAC071. As to expression, expressed in roots and stamens.

It is found in the nucleus. Its function is as follows. Transcription factor that possesses transactivation activity. Transcription activator involved in response to abiotic stresses. Plays a positive role during dehydration and salt stress. Binds specifically to the 5'-CATGTG-3' motif found in promoters of stress-responsive genes. The protein is NAC domain-containing protein 2 of Oryza sativa subsp. japonica (Rice).